The primary structure comprises 101 residues: Small ribosomal subunit protein uS14 (101 aa).

The protein belongs to the universal ribosomal protein uS14 family. Part of the 30S ribosomal subunit. Contacts proteins S3 and S10.

In terms of biological role, binds 16S rRNA, required for the assembly of 30S particles and may also be responsible for determining the conformation of the 16S rRNA at the A site. The sequence is that of Small ribosomal subunit protein uS14 from Chromobacterium violaceum (strain ATCC 12472 / DSM 30191 / JCM 1249 / CCUG 213 / NBRC 12614 / NCIMB 9131 / NCTC 9757 / MK).